Here is an 885-residue protein sequence, read N- to C-terminus: Cytosolic carboxypeptidase-like protein 5 (885 aa).

Positions 150–576 (YPFSYAECQD…AVAVAALDMA (427 aa)) constitute a Peptidase M14 domain. Positions 247 and 250 each coordinate Zn(2+). 2 disordered regions span residues 341–364 (SGSALKTSNQSNTSPPVATPTERE) and 392–428 (ESWEKSGVQREAEHSDENESAQSRGETNSAPSEQVPP). Positions 344–356 (ALKTSNQSNTSPP) are enriched in polar residues. Basic and acidic residues predominate over residues 393–408 (SWEKSGVQREAEHSDE). Over residues 411–428 (SAQSRGETNSAPSEQVPP) the composition is skewed to polar residues. Position 440 (His440) interacts with Zn(2+). Glu522 serves as the catalytic Proton donor/acceptor. Positions 606-668 (STGLTSNNRR…KSSPSFTFGT (63 aa)) are enriched in polar residues. 2 disordered regions span residues 606 to 788 (STGL…RTAL) and 866 to 885 (ALLKNSSRQTDQHIHRSLPT). Positions 682-691 (RECKAQEKRR) are enriched in basic and acidic residues. Positions 712–749 (LSAPVRAPLSPSSSSSSSSSSPSSSSSAPGPGSISLAG) are enriched in low complexity.

It belongs to the peptidase M14 family. The cofactor is Zn(2+).

The protein resides in the cytoplasm. The protein localises to the cytosol. It is found in the nucleus. It localises to the cytoskeleton. Its subcellular location is the spindle. The protein resides in the midbody. It catalyses the reaction gamma-L-glutamyl-L-glutamyl-[protein] + H2O = L-glutamyl-[protein] + L-glutamate. The catalysed reaction is (L-glutamyl)(n+1)-gamma-L-glutamyl-L-glutamyl-[protein] + H2O = (L-glutamyl)(n)-gamma-L-glutamyl-L-glutamyl-[protein] + L-glutamate. The enzyme catalyses C-terminal L-alpha-aminoacyl-L-glutamyl-[tubulin] + H2O = C-terminal L-alpha-aminoacyl-[tubulin] + L-glutamate. It carries out the reaction C-terminal L-alpha-aminoacyl-L-glutamyl-L-glutamyl-[tubulin] + H2O = C-terminal L-alpha-aminoacyl-L-glutamyl-[tubulin] + L-glutamate. In terms of biological role, metallocarboxypeptidase that mediates deglutamylation of tubulin and non-tubulin target proteins. Catalyzes the removal of polyglutamate side chains present on the gamma-carboxyl group of glutamate residues within the C-terminal tail of alpha- and beta-tubulin. Cleaves alpha- and gamma-linked polyglutamate tubulin side-chain, as well as the branching point glutamate. Also catalyzes the removal of alpha-linked glutamate residues from the carboxy-terminus of alpha-tubulin. The polypeptide is Cytosolic carboxypeptidase-like protein 5 (agbl5) (Danio rerio (Zebrafish)).